The following is a 553-amino-acid chain: uncharacterized protein (553 aa).

5 helical membrane-spanning segments follow: residues 13–30 (ALQA…GLGL), 37–59 (GISL…GLSI), 69–91 (SFGL…FSSF), 98–120 (LNML…SYTT), and 157–179 (TPAL…AVLL). 2 RCK C-terminal domains span residues 190–273 (LEVQ…LFGE) and 281–365 (KEDI…VLGN). 6 helical membrane-spanning segments follow: residues 375–397 (LVAV…SIPG), 402–424 (VRLG…GPRL), 436–458 (LMLR…GAHF), 468–490 (LLWI…FFAF), 497–514 (FGSV…PMAL), and 529–551 (AYAT…LLMF).

This sequence belongs to the AAE transporter (TC 2.A.81) family.

It is found in the cell membrane. This is an uncharacterized protein from Bacteroides fragilis (strain YCH46).